The chain runs to 204 residues: Small ribosomal subunit protein uS4 (204 aa).

Residues 92-153 (RRLDALVLRS…RSKEKTLFTI (62 aa)) form the S4 RNA-binding domain.

This sequence belongs to the universal ribosomal protein uS4 family. Part of the 30S ribosomal subunit. Contacts protein S5. The interaction surface between S4 and S5 is involved in control of translational fidelity.

Its function is as follows. One of the primary rRNA binding proteins, it binds directly to 16S rRNA where it nucleates assembly of the body of the 30S subunit. In terms of biological role, with S5 and S12 plays an important role in translational accuracy. The sequence is that of Small ribosomal subunit protein uS4 from Streptomyces coelicolor (strain ATCC BAA-471 / A3(2) / M145).